Here is a 699-residue protein sequence, read N- to C-terminus: Kinesin-like protein KIF3A (699 aa).

A Kinesin motor domain is found at 14 to 345 (NVKVVVRCRP…LRYANRAKNI (332 aa)). 100–107 (GQTGTGKT) contacts ATP. Residues 355 to 590 (PKDALLRQFQ…LSRELRLQML (236 aa)) adopt a coiled-coil conformation. 2 disordered regions span residues 372 to 421 (KKLE…KMIE) and 663 to 699 (SLMKLERPRTSKGKARPKTGRRKRSAKPETVIDSLLQ). Residues 376–400 (EGEEISGSDISGSEEDDDEEGEVGE) are compositionally biased toward acidic residues. The span at 672–687 (TSKGKARPKTGRRKRS) shows a compositional bias: basic residues. S687 is subject to Phosphoserine. A globular region spans residues 697-699 (LLQ).

Belongs to the TRAFAC class myosin-kinesin ATPase superfamily. Kinesin family. Kinesin II subfamily. In terms of assembly, heterodimer of KIF3A and KIF3B. Interacts with CIMAP3. Interacts with CLN3. Interacts with DCTN1. Interacts with FLCN. Interacts with AP3B1.

The protein resides in the cytoplasm. The protein localises to the cytoskeleton. It localises to the cell projection. It is found in the cilium. Its subcellular location is the microtubule organizing center. The protein resides in the centrosome. The protein localises to the centriole. In terms of biological role, microtubule-based anterograde translocator for membranous organelles. Plus end-directed microtubule sliding activity in vitro. Plays a role in primary cilia formation. Plays a role in centriole cohesion and subdistal appendage organization and function. Regulates the formation of the subdistal appendage via recruitment of DCTN1 to the centriole. Also required for ciliary basal feet formation and microtubule anchoring to mother centriole. The sequence is that of Kinesin-like protein KIF3A (KIF3A) from Homo sapiens (Human).